The sequence spans 156 residues: D-aminoacyl-tRNA deacylase (156 aa).

Residues 137–138 (GP) carry the Gly-cisPro motif, important for rejection of L-amino acids motif.

The protein belongs to the DTD family. In terms of assembly, homodimer.

It is found in the cytoplasm. It catalyses the reaction glycyl-tRNA(Ala) + H2O = tRNA(Ala) + glycine + H(+). It carries out the reaction a D-aminoacyl-tRNA + H2O = a tRNA + a D-alpha-amino acid + H(+). Its function is as follows. An aminoacyl-tRNA editing enzyme that deacylates mischarged D-aminoacyl-tRNAs. Also deacylates mischarged glycyl-tRNA(Ala), protecting cells against glycine mischarging by AlaRS. Acts via tRNA-based rather than protein-based catalysis; rejects L-amino acids rather than detecting D-amino acids in the active site. By recycling D-aminoacyl-tRNA to D-amino acids and free tRNA molecules, this enzyme counteracts the toxicity associated with the formation of D-aminoacyl-tRNA entities in vivo and helps enforce protein L-homochirality. The sequence is that of D-aminoacyl-tRNA deacylase from Dictyoglomus turgidum (strain DSM 6724 / Z-1310).